A 930-amino-acid polypeptide reads, in one-letter code: Protein translocase subunit SecA (930 aa).

ATP contacts are provided by residues glutamine 83, 101–105 (GEGKT), and aspartate 491.

Belongs to the SecA family. In terms of assembly, monomer and homodimer. Part of the essential Sec protein translocation apparatus which comprises SecA, SecYEG and auxiliary proteins SecDF. Other proteins may also be involved.

It is found in the cell inner membrane. It localises to the cellular thylakoid membrane. The protein resides in the cytoplasm. It carries out the reaction ATP + H2O + cellular proteinSide 1 = ADP + phosphate + cellular proteinSide 2.. Its function is as follows. Part of the Sec protein translocase complex. Interacts with the SecYEG preprotein conducting channel. Has a central role in coupling the hydrolysis of ATP to the transfer of proteins into and across the cell membrane, serving as an ATP-driven molecular motor driving the stepwise translocation of polypeptide chains across the membrane. Functionally, probably participates in protein translocation into and across both the cytoplasmic and thylakoid membranes in cyanobacterial cells. The polypeptide is Protein translocase subunit SecA (Nostoc sp. (strain PCC 7120 / SAG 25.82 / UTEX 2576)).